Here is a 287-residue protein sequence, read N- to C-terminus: Acetylglutamate kinase (287 aa).

Residues 70–71 (GG), R92, and N184 contribute to the substrate site.

Belongs to the acetylglutamate kinase family. ArgB subfamily.

Its subcellular location is the cytoplasm. It catalyses the reaction N-acetyl-L-glutamate + ATP = N-acetyl-L-glutamyl 5-phosphate + ADP. The protein operates within amino-acid biosynthesis; L-arginine biosynthesis; N(2)-acetyl-L-ornithine from L-glutamate: step 2/4. Its function is as follows. Catalyzes the ATP-dependent phosphorylation of N-acetyl-L-glutamate. The protein is Acetylglutamate kinase of Ruegeria pomeroyi (strain ATCC 700808 / DSM 15171 / DSS-3) (Silicibacter pomeroyi).